The sequence spans 397 residues: MPKVIAINAGSSSLKFQLFNMPSEEVLTKGVVERIGFEDAIFNITVNGEKIKEVTPIPDHAVAVKMLLDKLIELGIIQSFDEIEGIGHRVVHGGEKFSDSVLITDETLKEIEDLSDLAPLHNPANVVGIKAFREVLPNVPAVAVFDTAFHQTMPEQSFLYSLPYEYYEKFGIRKYGFHGTSHKYVTQRAAELLGRPIEQLRLISCHLGNGASIAAVEGGKSIDTSMGFTPLAGVAMGTRSGNIDPALIPYIMQKTGKTAEEVIDILNKKSGMLGLTGFSSDLRDIEEAAAKGDQRAELALEVFAGRIHKYIGSYAARMCGVDAIIFTAGIGENSDIVRAKVLRGLEFMGVYWDPALNKVRGKEAFISYPHSPVKVLVIPTNEEVMIARDVMRLANLA.

Position 8 (Asn8) interacts with Mg(2+). Lys15 is an ATP binding site. Arg89 serves as a coordination point for substrate. Asp146 serves as the catalytic Proton donor/acceptor. Residues 206 to 210, 281 to 283, and 329 to 333 contribute to the ATP site; these read HLGNG, DLR, and GIGEN. Mg(2+) is bound at residue Glu382.

This sequence belongs to the acetokinase family. Homodimer. Requires Mg(2+) as cofactor. Mn(2+) serves as cofactor.

The protein resides in the cytoplasm. It carries out the reaction acetate + ATP = acetyl phosphate + ADP. Its pathway is metabolic intermediate biosynthesis; acetyl-CoA biosynthesis; acetyl-CoA from acetate: step 1/2. Catalyzes the formation of acetyl phosphate from acetate and ATP. Can also catalyze the reverse reaction. The protein is Acetate kinase of Anoxybacillus flavithermus (strain DSM 21510 / WK1).